The following is a 332-amino-acid chain: PRKC apoptosis WT1 regulator protein (332 aa).

Composition is skewed to polar residues over residues 1-14 (MATG…STTD) and 52-62 (AQTTAAGTSEL). The segment at 1 to 253 (MATGGYRSSG…HNRDTSAPAN (253 aa)) is disordered. The B30.2/SPRY domain-binding motif motif lies at 61–65 (ELNHG). The span at 65–79 (GPAGAAAPAAPGPGA) shows a compositional bias: low complexity. Residues 137-153 (RKGKGQIEKRKLREKRR) carry the Nuclear localization signal motif. The segment at 137 to 195 (RKGKGQIEKRKLREKRRSTGVVNIPAAECLDEYEDDEAGQKERKREDAITQQNTIQNEA) is selective for apoptosis induction in cancer cells (SAC). At T155 the chain carries Phosphothreonine; by PKA. The segment covering 174-184 (AGQKERKREDA) has biased composition (basic and acidic residues). A coiled-coil region spans residues 176–198 (QKERKREDAITQQNTIQNEAASL). The segment covering 185 to 195 (ITQQNTIQNEA) has biased composition (polar residues). Phosphoserine is present on S223. The span at 234–247 (PRTDRSGFSRHNRD) shows a compositional bias: basic and acidic residues. The interval 292-332 (IGKLKEEIDLLNRDLDDMEDENEQLKQENKTLLKVVGQLTR) is leucine-zipper.

Homooligomer. Interacts (via the C-terminal region) with WT1. Interacts with THAP1. Interacts with AATF. Interacts with BACE1. Interacts with SPSB1 (via B30.2/SPRY domain); this interaction is direct and occurs in association with the Elongin BC complex. Interacts with SPSB2 (via B30.2/SPRY domain); this interaction occurs in association with the Elongin BC complex. Interacts with SPSB4 (via B30.2/SPRY domain); this interaction occurs in association with the Elongin BC complex. Component of a ternary complex composed of SQSTM1 and PRKCZ. Interacts with actin. In terms of processing, preferentially phosphorylated at the Thr-155 by PKC in cancer cells.

The protein resides in the cytoplasm. It localises to the nucleus. Pro-apoptotic protein capable of selectively inducing apoptosis in cancer cells, sensitizing the cells to diverse apoptotic stimuli and causing regression of tumors in animal models. Induces apoptosis in certain cancer cells by activation of the Fas prodeath pathway and coparallel inhibition of NF-kappa-B transcriptional activity. Inhibits the transcriptional activation and augments the transcriptional repression mediated by WT1. Down-regulates the anti-apoptotic protein BCL2 via its interaction with WT1. Also seems to be a transcriptional repressor by itself. May be directly involved in regulating the amyloid precursor protein (APP) cleavage activity of BACE1. This is PRKC apoptosis WT1 regulator protein (Pawr) from Rattus norvegicus (Rat).